The following is a 362-amino-acid chain: Chemerin-like receptor 1 (362 aa).

The Extracellular portion of the chain corresponds to 1–37 (MEAEDYNASYEDYPDDVDPIVVLEELSPLEGRVVRIL). Asparagine 7 carries an N-linked (GlcNAc...) asparagine glycan. A helical transmembrane segment spans residues 38-58 (LVAVYSVICLLGILGNGLVIV). At 59–70 (MITCKMKRTVNT) the chain is on the cytoplasmic side. The helical transmembrane segment at 71-91 (VWFLNLAVADFLFNVFLPVHI) threads the bilayer. Residues 92–108 (AYAALDYHWVFGTAMCK) lie on the Extracellular side of the membrane. A disulfide bridge links cysteine 107 with cysteine 184. Residues 109–129 (ISNFLLIHNMFTSVFLLTVIS) form a helical membrane-spanning segment. Residues 130–151 (FDRCVSVLLPVWSQNHRSVRLA) lie on the Cytoplasmic side of the membrane. Residues 152–172 (YTACLVIWVLAFFLSSPSLVF) form a helical membrane-spanning segment. Residues 173–219 (RDTARLHGKISCFNNFSLSAAVSSPWPAHPQVDPVGSGRHKVVTITR) are Extracellular-facing. A glycan (N-linked (GlcNAc...) asparagine) is linked at asparagine 187. Residues 220-240 (FLCGFLVPGLITTACYLTIVY) form a helical membrane-spanning segment. Topologically, residues 241 to 255 (KLQRSRLAKTKKPFK) are cytoplasmic. A helical membrane pass occupies residues 256-276 (IILTIIVTFFLCWCPYHAFYL). The Extracellular segment spans residues 277-281 (LELRR). A helical membrane pass occupies residues 282 to 302 (GSVPPSVFSLGVPLATAIAIA). The Cytoplasmic portion of the chain corresponds to 303-362 (NSCMNPILYVFMGQDFKKFRVALFSRLVNALSEDTGHSSYPSHRSFTKMSSMNERETGML). Position 334 is a phosphoserine (serine 334). Residues 336 to 362 (DTGHSSYPSHRSFTKMSSMNERETGML) form a disordered region. Threonine 337 carries the post-translational modification Phosphothreonine. Positions 339 to 354 (HSSYPSHRSFTKMSSM) are enriched in polar residues. A phosphoserine mark is found at serine 344, serine 347, and serine 353.

Belongs to the chemokine-like receptor (CMKLR) family. In terms of tissue distribution, widely expressed in several tissues including adipose, muscle, liver and brain.

It localises to the cell membrane. Functionally, receptor for the chemoattractant adipokine chemerin/RARRES2 and for the omega-3 fatty acid derived molecule resolvin E1. Interaction with RARRES2 initiates activation of G proteins G(i)/G(o) and beta-arrestin pathways inducing cellular responses via second messenger pathways such as intracellular calcium mobilization, phosphorylation of MAP kinases MAPK1/MAPK3 (ERK1/2), TYRO3, MAPK14/P38MAPK and PI3K leading to multifunctional effects, like, reduction of immune responses, enhancing of adipogenesis and angionesis. Resolvin E1 down-regulates cytokine production in macrophages by reducing the activation of MAPK1/3 (ERK1/2) and NF-kappa-B. Positively regulates adipogenesis and adipocyte metabolism. This Bos taurus (Bovine) protein is Chemerin-like receptor 1 (CMLKR1).